A 357-amino-acid chain; its full sequence is tRNA N6-adenosine threonylcarbamoyltransferase (357 aa).

Fe cation contacts are provided by H120 and H124. Substrate is bound by residues 143–147 (LVSGG), D176, G189, and N289. D317 contributes to the Fe cation binding site.

Belongs to the KAE1 / TsaD family. Fe(2+) is required as a cofactor.

The protein localises to the cytoplasm. The enzyme catalyses L-threonylcarbamoyladenylate + adenosine(37) in tRNA = N(6)-L-threonylcarbamoyladenosine(37) in tRNA + AMP + H(+). Its function is as follows. Required for the formation of a threonylcarbamoyl group on adenosine at position 37 (t(6)A37) in tRNAs that read codons beginning with adenine. Is involved in the transfer of the threonylcarbamoyl moiety of threonylcarbamoyl-AMP (TC-AMP) to the N6 group of A37, together with TsaE and TsaB. TsaD likely plays a direct catalytic role in this reaction. The sequence is that of tRNA N6-adenosine threonylcarbamoyltransferase from Polynucleobacter necessarius subsp. necessarius (strain STIR1).